A 67-amino-acid polypeptide reads, in one-letter code: MAIKPKYVKQLGTLLLEEYPQAFNTDFETNKESVETLTNVESKGVRNRIAGYITRKKGSNTPPSASA.

It belongs to the eukaryotic ribosomal protein eS17 family.

This is Small ribosomal subunit protein eS17 from Haloquadratum walsbyi (strain DSM 16790 / HBSQ001).